Consider the following 136-residue polypeptide: Small ribosomal subunit protein uS8 (136 aa).

This sequence belongs to the universal ribosomal protein uS8 family. As to quaternary structure, part of the 30S ribosomal subunit. Contacts proteins S5 and S12.

One of the primary rRNA binding proteins, it binds directly to 16S rRNA central domain where it helps coordinate assembly of the platform of the 30S subunit. This chain is Small ribosomal subunit protein uS8, found in Synechococcus sp. (strain JA-2-3B'a(2-13)) (Cyanobacteria bacterium Yellowstone B-Prime).